Consider the following 338-residue polypeptide: Cilia- and flagella-associated protein 36 (338 aa).

Residues 142 to 179 (ISDLEQEEMKLVSEALRLSKEEYEREQLRRSAKELNCT) are a coiled coil. Disordered stretches follow at residues 175–220 (ELNC…ESPY) and 281–314 (KKQE…KKSL). Positions 187-202 (KQSNGSERTPSNTELP) are enriched in polar residues. The stretch at 255-330 (NLSQAEKEQL…AEKLKEEVIL (76 aa)) forms a coiled coil.

Belongs to the CFAP36 family.

It localises to the nucleus. Its subcellular location is the cytoplasm. The protein resides in the cell projection. It is found in the cilium. The protein localises to the flagellum. In Xenopus laevis (African clawed frog), this protein is Cilia- and flagella-associated protein 36.